A 526-amino-acid polypeptide reads, in one-letter code: MQQSTIGAVYSNFLGQAPDWYKKSIIAFLIFNPILFMADPYIAGWALVLEFIFTLAMALKCYPLQPGGLLLIEALFIGMTSPEHMKHEIVVNIEVVLLLVFMVAGIYFMKDMLLFMFTKLLLKLKNKIALSMSFVAASAFLSAFLDALTVVAVIIAVGMGFYSIYHKVASGKEFHSDHDHTSDDHVDHPKRQDLEDFRAFLRNLMMHAAVGTALGGVMTMVGEPQNLIIADKASWNFGEFFVRMSPVTIPVFFAGIATTFALEKFKIFSYGAQLPQVVRDILTAHSHQQEATRTKQDSAKLWIQGFIGIWLVIGLAGHFAAVGLIGLSIIVLATSMNGIIDEHSIGKAFEEALPFTALLCVFFGVVAVIIDQGLFTPVIDWVLTFEGRSQLVMFYLANGALSMVSDNVFVGSVYITEVAAALEHGHITRDEFDMLAVAINTGTNLPSVATPNGQAAFLFLLTSAIAPLLRLSYGTMVYMALPYTIVLTIVGLAATYFGLGDLTNWLYDMHLIEHHSATLGAEAAAH.

11 helical membrane-spanning segments follow: residues 25 to 45 (IIAF…IAGW), 52 to 72 (IFTL…LLLI), 89 to 109 (IVVN…IYFM), 139 to 159 (AFLS…AVGM), 204 to 224 (LMMH…VGEP), 240 to 260 (FFVR…ATTF), 305 to 325 (GFIG…VGLI), 355 to 375 (FTAL…QGLF), 391 to 411 (LVMF…VFVG), 448 to 468 (VATP…IAPL), and 479 to 499 (MALP…YFGL).

This sequence belongs to the NhaB Na(+)/H(+) (TC 2.A.34) antiporter family.

It is found in the cell inner membrane. The enzyme catalyses 2 Na(+)(in) + 3 H(+)(out) = 2 Na(+)(out) + 3 H(+)(in). In terms of biological role, na(+)/H(+) antiporter that extrudes sodium in exchange for external protons. The protein is Na(+)/H(+) antiporter NhaB of Pseudoalteromonas atlantica (strain T6c / ATCC BAA-1087).